Reading from the N-terminus, the 500-residue chain is Glutathione reductase (500 aa).

FAD-binding residues include Ser-12 and Gly-13. Residue Ser-12 coordinates glutathione. Arg-19 lines the glutathione pocket. FAD-binding residues include Glu-32, Thr-39, Cys-40, and Lys-48. Cys-40 and Cys-45 are disulfide-bonded. Tyr-95 contributes to the glutathione binding site. Ala-111 contributes to the FAD binding site. 5 residues coordinate NADP(+): Ile-187, Glu-190, Arg-207, Arg-213, and Gly-272. Residues Asp-312 and Thr-354 each coordinate FAD. Glutathione is bound at residue Arg-362. Val-384 is a binding site for NADP(+). His-485 lines the FAD pocket. His-485 serves as the catalytic Proton acceptor.

Belongs to the class-I pyridine nucleotide-disulfide oxidoreductase family. Homodimer. FAD serves as cofactor.

It is found in the cytoplasm. It carries out the reaction 2 glutathione + NADP(+) = glutathione disulfide + NADPH + H(+). Functionally, catalyzes the reduction of glutathione disulfide (GSSG) to reduced glutathione (GSH). Constitutes the major mechanism to maintain a high GSH:GSSG ratio in the cytosol. The protein is Glutathione reductase of Plasmodium falciparum (isolate K1 / Thailand).